The sequence spans 185 residues: Calcium-binding protein CML37 (185 aa).

Residues 1 to 12 (MTLAKNQKSSLS) show a composition bias toward polar residues. The interval 1–45 (MTLAKNQKSSLSRLYKKVSSKRSESSRNLEDESRTSSNSSGSSSL) is disordered. Over residues 21–34 (KRSESSRNLEDESR) the composition is skewed to basic and acidic residues. The segment covering 35-44 (TSSNSSGSSS) has biased composition (low complexity). 4 consecutive EF-hand domains span residues 45-80 (LNVNELRTVFDYMDANSDGKISGEELQSCVSLLGGA), 81-116 (LSSREVEEVVKTSDVDGDGFIDFEEFLKLMEGEDGS), 119-154 (ERRKELKEAFGMYVMEGEEFITAASLRRTLSRLGES), and 155-185 (CTVDACKVMIRGFDQNDDGVLSFDEFVLMMR). Ca(2+) contacts are provided by D58, N60, D62, K64, E69, D94, D96, D98, and E105. The Ca(2+) site is built by D168, N170, D172, and E179.

As to quaternary structure, binds to ABCG36. In terms of tissue distribution, expressed in cotyledons, stipule, young leaves and at the hypocotyl-root junction. In mature root, expressed in the stele, cortex, emerging lateral root, root tip and root cap. In mature plant, expressed at the base of cauline and floral branches, and in rosette and cauline leaves. Expressed from stage 9 to 14 of flower development in anthers. At stage 15, expressed in carpel, sepals, petals and pollen until dehiscence. Expressed in developing seeds and young siliques.

In terms of biological role, potential calcium sensor that binds calcium in vitro. The sequence is that of Calcium-binding protein CML37 from Arabidopsis thaliana (Mouse-ear cress).